Reading from the N-terminus, the 674-residue chain is Ribosome biogenesis protein BOP1 homolog (674 aa).

The tract at residues 1–28 (MASTSAATPLKNKRKFENGKKKPKTLKD) is disordered. The span at 15–28 (KFENGKKKPKTLKD) shows a compositional bias: basic and acidic residues. WD repeat units lie at residues 342–384 (GHTG…KTFQ), 386–425 (DGEV…RLHV), 427–458 (QTEA…LMLK), 459–500 (MPNE…SQCP), 503–541 (KRKG…LVKK), 587–626 (HHTA…DFVK), and 643–674 (PNDL…LFTY).

This sequence belongs to the WD repeat BOP1/ERB1 family.

The protein resides in the nucleus. It is found in the nucleolus. The protein localises to the nucleoplasm. Its function is as follows. Required for maturation of ribosomal RNAs and formation of the large ribosomal subunit. The protein is Ribosome biogenesis protein BOP1 homolog of Caenorhabditis elegans.